Consider the following 352-residue polypeptide: MSTDSDAETVDLADGVDHQVAMVMDLNKCIGCQTCTVACKSLWTEGGGRDYMYWNNVETKPGKGYPRNWEESGGGWKSSEHKERKPGQIPDKEDYGDAWEFNHEEIMYNGSDRPLRPDSDPEWGPNWDEDQGTGEYPNSYYFYLPRICNHCTHPSCVEACPRKAIYKREEDGIVLIDQERCRGYRYCVEGCPYKKVYYNATQKTSEKCIFCYPRIEGEGPDGKTFAPACAEDCPPQLRLVGFLDDEQGPIHKLVEEYEVALPLHPEYQTQPNVYYIPPFAPPQHSEDGESVDVDRIPRNYLEELFGERVHDALDTIEREREKVNRGGGSELLDMLTDTNPARKFRLEVFDDD.

One can recognise a 4Fe-4S ferredoxin-type 1 domain in the interval 20-48 (VAMVMDLNKCIGCQTCTVACKSLWTEGGG). [4Fe-4S] cluster contacts are provided by Cys29, Cys32, Cys35, and Cys39. Disordered regions lie at residues 63–95 (KGYP…KEDY) and 111–131 (SDRP…DEDQ). Residues 78–95 (SSEHKERKPGQIPDKEDY) are compositionally biased toward basic and acidic residues. 4Fe-4S ferredoxin-type domains lie at 139–170 (SYYF…KREE) and 172–201 (GIVL…YNAT). [4Fe-4S] cluster-binding residues include Cys148, Cys151, and Cys156. [3Fe-4S] cluster contacts are provided by Cys160, Cys181, and Cys187. Positions 191, 208, 211, 229, and 233 each coordinate [4Fe-4S] cluster.

As to quaternary structure, probable multiprotein complex; a catalytic heterodimer of an alpha and beta chain is proposed to associate with additional subunits involved in membrane attachment and electron transfer. [4Fe-4S] cluster is required as a cofactor. [3Fe-4S] cluster serves as cofactor.

It is found in the cell membrane. It carries out the reaction nitrate + a quinol = a quinone + nitrite + H2O. With respect to regulation, inhibited by cyanide, azide and antimycin A. Enzyme stability is not dependent on salt concentration. Functionally, the respiratory membrane-bound nitrate reductase enzyme complex plays a role in generation of metabolic energy by using nitrate as a terminal electron acceptor during anaerobic conditions. The beta chain is an electron transfer unit containing four cysteine clusters involved in the formation of iron-sulfur centers. The sequence is that of Respiratory nitrate reductase subunit beta (narH) from Haloferax mediterranei (strain ATCC 33500 / DSM 1411 / JCM 8866 / NBRC 14739 / NCIMB 2177 / R-4) (Halobacterium mediterranei).